Reading from the N-terminus, the 69-residue chain is Large ribosomal subunit protein bL31 (69 aa).

Cys-17, Cys-19, Cys-37, and Cys-40 together coordinate Zn(2+).

It belongs to the bacterial ribosomal protein bL31 family. Type A subfamily. Part of the 50S ribosomal subunit. Zn(2+) serves as cofactor.

Its function is as follows. Binds the 23S rRNA. The protein is Large ribosomal subunit protein bL31 of Caldanaerobacter subterraneus subsp. tengcongensis (strain DSM 15242 / JCM 11007 / NBRC 100824 / MB4) (Thermoanaerobacter tengcongensis).